The following is a 493-amino-acid chain: Cyclin-dependent kinase-like 2 (493 aa).

Residues 4–287 form the Protein kinase domain; the sequence is YENLGLVGEG…CAELLHHDFF (284 aa). ATP contacts are provided by residues 10–18 and Lys33; that span reads VGEGSYGMV. The [NKR]KIAxRE motif lies at 45–51; the sequence is KKIAMRE. Asp126 functions as the Proton acceptor in the catalytic mechanism. 2 disordered regions span residues 311–338 and 363–384; these read VSLS…KTLV and GEKA…SRTS. Positions 320-336 are enriched in basic and acidic residues; that stretch reads RKKEKEKDDSLGEERKT.

Belongs to the protein kinase superfamily. CMGC Ser/Thr protein kinase family. CDC2/CDKX subfamily.

It localises to the cytoplasm. It is found in the nucleus. The catalysed reaction is L-seryl-[protein] + ATP = O-phospho-L-seryl-[protein] + ADP + H(+). It catalyses the reaction L-threonyl-[protein] + ATP = O-phospho-L-threonyl-[protein] + ADP + H(+). This is Cyclin-dependent kinase-like 2 from Pongo abelii (Sumatran orangutan).